Here is a 271-residue protein sequence, read N- to C-terminus: Aquaporin-11 (271 aa).

At 1-14 the chain is on the cytoplasmic side; that stretch reads MSPLLGLRSELQDT. A helical membrane pass occupies residues 15–35; sequence CTSLGLMLSVVLLMGLARVVA. The Lumenal portion of the chain corresponds to 36 to 41; the sequence is RQQLHR. The helical transmembrane segment at 42-62 threads the bilayer; sequence PVAHAFVLEFLATFQLCCCTH. Over 63 to 74 the chain is Cytoplasmic; it reads ELQLLSEQHPAH. A helical membrane pass occupies residues 75–95; the sequence is PTWTLTLVYFFSLVHGLTLVG. Topologically, residues 96–163 are lumenal; sequence TSSNPCGVMM…ACKNPIRVDL (68 aa). The NPC motif lies at 99–101; it reads NPC. A helical membrane pass occupies residues 164 to 184; that stretch reads LKAVITEAVCSFLFHSALLHF. The Cytoplasmic segment spans residues 185–194; the sequence is QEVRTKLRIH. The chain crosses the membrane as a helical span at residues 195–215; it reads LLAALITFLVYAGGSLTGAVF. The NPA signature appears at 216-218; it reads NPA. Topologically, residues 216-234 are lumenal; sequence NPALALSLHFMCFDEAFPQ. The helical transmembrane segment at 235 to 255 threads the bilayer; that stretch reads FFIVYWLAPSLGILLMILMFS. The Cytoplasmic segment spans residues 256–271; that stretch reads FFLPWLHNNHTINKKE.

Belongs to the MIP/aquaporin (TC 1.A.8) family. AQP11/AQP12 subfamily. Homodimer; disulfide-linked. Homotetramer. Can also form homomultimer. Not glycosylated. In terms of tissue distribution, detected in the sperm head and tail (at protein level). Expressed in subcutaneous adipocytes. Expressed in testis, kidney and ejaculated spermatozoa.

The protein localises to the endoplasmic reticulum membrane. Its subcellular location is the cytoplasmic vesicle membrane. It is found in the cell membrane. The enzyme catalyses H2O(in) = H2O(out). The catalysed reaction is glycerol(in) = glycerol(out). It catalyses the reaction H2O2(out) = H2O2(in). Its function is as follows. Channel protein that facilitates the transport of water, glycerol and hydrogen peroxide across membrane of cell or organelles guaranteeing intracellular homeostasis in several organes like liver, kidney and brain. In situation of stress, participates in endoplasmic reticulum (ER) homeostasis by regulating redox homeostasis through the transport of hydrogen peroxide across the endoplasmic reticulum membrane thereby regulating the oxidative stress through the NADPH oxidase 2 pathway. Plays a role by maintaining an environment suitable for translation or protein foldings in the ER lumen namely by participating in the PKD1 glycosylation processing resulting in regulation of PKD1 membrane trafficking thereby preventing the accumulation of unfolding protein in ER. Plays a role in the proximal tubule function by regulating its endosomal acidification. May play a role in postnatal kidney development. The sequence is that of Aquaporin-11 from Homo sapiens (Human).